The sequence spans 194 residues: RFKKIRRLGTLPGLTSKRPRSGSDLKNPLRSVKRSQYRIRLEEKQKLRFHYGLTERQLLRYVHIAGKAKGSTGQVLLQLLEMRLDNILFRLGMASTIPGARQLVTHRHILVNGRIVDIPSYRCKPRDIITTKDKQRSKALIQNYIASSPHEELPNHLTIDSFQYKGLVNQIIDSKWIGLKINELLVVEYYSRQT.

Residues 1-29 (RFKKIRRLGTLPGLTSKRPRSGSDLKNPL) are disordered. The S4 RNA-binding domain occupies 82–143 (MRLDNILFRL…KQRSKALIQN (62 aa)).

This sequence belongs to the universal ribosomal protein uS4 family. Part of the 30S ribosomal subunit. Contacts protein S5. The interaction surface between S4 and S5 is involved in control of translational fidelity.

The protein localises to the plastid. The protein resides in the chloroplast. One of the primary rRNA binding proteins, it binds directly to 16S rRNA where it nucleates assembly of the body of the 30S subunit. Functionally, with S5 and S12 plays an important role in translational accuracy. The protein is Small ribosomal subunit protein uS4c (rps4) of Furcraea foetida (Mauritius hemp).